The primary structure comprises 196 residues: Golgi to ER traffic protein 1 (196 aa).

Residues 1–10 are Lumenal-facing; that stretch reads MFLDLHPYTI. A helical membrane pass occupies residues 11–30; it reads LVSIFIILLVKQIVGRIGKS. At 31–114 the chain is on the cytoplasmic side; that stretch reads TIQEFVWLLY…SIDKLANVLL (84 aa). The stretch at 76–114 forms a coiled coil; it reads AKWTKLNRQADKLTSEIQKLNEEIRQSKASIDKLANVLL. A helical membrane pass occupies residues 115-135; sequence MVLTTLPIWVARIFFRKTHLF. The Lumenal segment spans residues 136–159; that stretch reads YLRSGIFPRYIEWVLALPFFPSGA. The helical transmembrane segment at 160-176 threads the bilayer; the sequence is VGLTVWMFAANSVIHNV. Topologically, residues 177-196 are cytoplasmic; that stretch reads ISLVSFAFEKRVEKPVRQKK.

It belongs to the WRB/GET1 family. Component of the Golgi to ER traffic (GET) complex, which is composed of GET1, GET2 and GET3. Within the complex, GET1 and GET2 form a heterotetramer which is stabilized by phosphatidylinositol binding and which binds to the GET3 homodimer.

The protein localises to the endoplasmic reticulum membrane. Its subcellular location is the golgi apparatus membrane. Required for the post-translational delivery of tail-anchored (TA) proteins to the endoplasmic reticulum. Together with GET2, acts as a membrane receptor for soluble GET3, which recognizes and selectively binds the transmembrane domain of TA proteins in the cytosol. The GET complex cooperates with the HDEL receptor ERD2 to mediate the ATP-dependent retrieval of resident ER proteins that contain a C-terminal H-D-E-L retention signal from the Golgi to the ER. The protein is Golgi to ER traffic protein 1 of Candida tropicalis (strain ATCC MYA-3404 / T1) (Yeast).